The primary structure comprises 284 residues: NAD kinase (284 aa).

The active-site Proton acceptor is the Asp-70. NAD(+)-binding positions include 70 to 71 (DG), 139 to 140 (NE), Lys-167, Asp-169, Leu-177, 180 to 185 (TAYNLS), and Gln-236.

The protein belongs to the NAD kinase family. The cofactor is a divalent metal cation.

Its subcellular location is the cytoplasm. It catalyses the reaction NAD(+) + ATP = ADP + NADP(+) + H(+). Functionally, involved in the regulation of the intracellular balance of NAD and NADP, and is a key enzyme in the biosynthesis of NADP. Catalyzes specifically the phosphorylation on 2'-hydroxyl of the adenosine moiety of NAD to yield NADP. This chain is NAD kinase, found in Helicobacter pylori (strain G27).